An 88-amino-acid chain; its full sequence is Small ribosomal subunit protein bS20 (88 aa).

The segment covering 1–16 (MANTHSAKKATRKITR) has biased composition (basic residues). Residues 1 to 20 (MANTHSAKKATRKITRRTAV) are disordered.

This sequence belongs to the bacterial ribosomal protein bS20 family.

Binds directly to 16S ribosomal RNA. The protein is Small ribosomal subunit protein bS20 of Nitrobacter hamburgensis (strain DSM 10229 / NCIMB 13809 / X14).